Here is a 212-residue protein sequence, read N- to C-terminus: Peptide methionine sulfoxide reductase MsrA (212 aa).

Cys52 is a catalytic residue.

This sequence belongs to the MsrA Met sulfoxide reductase family.

The enzyme catalyses L-methionyl-[protein] + [thioredoxin]-disulfide + H2O = L-methionyl-(S)-S-oxide-[protein] + [thioredoxin]-dithiol. It catalyses the reaction [thioredoxin]-disulfide + L-methionine + H2O = L-methionine (S)-S-oxide + [thioredoxin]-dithiol. Has an important function as a repair enzyme for proteins that have been inactivated by oxidation. Catalyzes the reversible oxidation-reduction of methionine sulfoxide in proteins to methionine. This is Peptide methionine sulfoxide reductase MsrA from Escherichia coli O17:K52:H18 (strain UMN026 / ExPEC).